The primary structure comprises 810 residues: Phenylalanine--tRNA ligase beta subunit (810 aa).

The 114-residue stretch at 40–153 folds into the tRNA-binding domain; the sequence is KLPDQKVIVG…EACEIGQPLA (114 aa). Residues 399 to 480 enclose the B5 domain; that stretch reads AAQKIVSLRP…RLYGYNNLEP (82 aa). Mg(2+) contacts are provided by Asp-458, Asp-464, Glu-467, and Glu-468. Residues 714–808 enclose the FDX-ACB domain; the sequence is SKFPVVERDL…ARSELGAVIR (95 aa).

The protein belongs to the phenylalanyl-tRNA synthetase beta subunit family. Type 1 subfamily. As to quaternary structure, tetramer of two alpha and two beta subunits. Mg(2+) serves as cofactor.

The protein resides in the cytoplasm. It carries out the reaction tRNA(Phe) + L-phenylalanine + ATP = L-phenylalanyl-tRNA(Phe) + AMP + diphosphate + H(+). This Chlorobaculum tepidum (strain ATCC 49652 / DSM 12025 / NBRC 103806 / TLS) (Chlorobium tepidum) protein is Phenylalanine--tRNA ligase beta subunit.